Consider the following 1042-residue polypeptide: Serine/threonine-protein kinase LATS2 (1042 aa).

The segment at R23–D44 is disordered. Residues S30–D44 are compositionally biased toward polar residues. A Phosphoserine; by AURKA modification is found at S82. The UBA domain maps to E97 to M138. The interaction with ubiquitinated AMOTL2 stretch occupies residues R100–Y140. Residues H237–P282 form a disordered region. Over residues Q258–T267 the composition is skewed to polar residues. At T267 the chain carries Phosphothreonine. At S362 the chain carries Phosphoserine. Disordered regions lie at residues R378–P399, P442–L481, and Q501–S550. The PPxY motif motif lies at P472–Y475. A compositionally biased stretch (basic and acidic residues) spans T507 to Q530. A Phosphoserine modification is found at S534. The segment covering N541 to S550 has biased composition (basic and acidic residues). Residues F626–F931 enclose the Protein kinase domain. Residues L632–V640 and K655 each bind ATP. The active-site Proton acceptor is the D749. Residues N932 to P1010 enclose the AGC-kinase C-terminal domain. Residue T999 is modified to Phosphothreonine. The interval P1014–V1042 is disordered.

This sequence belongs to the protein kinase superfamily. AGC Ser/Thr protein kinase family. As to quaternary structure, interacts with and is phosphorylated by AURKA. Binds to AR. Interacts with AJUBA during mitosis and this complex regulates organization of the spindle apparatus through recruitment of gamma-tubulin to the centrosome. Interacts (via PPxY motif) with YAP1 (via WW domains). Interacts with MOB1A and MOB1B. Interacts with LIMD1, WTIP and AJUBA. Interacts with SNAI1. Interacts with WWC1, WWC2 and WWC3 (via their WW domains). Interacts (via UBA domain) with ubiquitinated AMOTL2; the interaction promotes LATS2 phosphorylation of YAP1. The cofactor is Mg(2+). Autophosphorylated and phosphorylated during M-phase and the G1/S-phase of the cell cycle. Phosphorylated and activated by STK3/MST2. Phosphorylated by MAP4Ks; in parallel to STK3/MST2 and resulting to its activation. Phosphorylation by NUAK2 may regulate its activity in phosphorylation and inactivation YAP1. Expressed at high levels in ovary and testis and at lower levels in all other tissues examined.

It localises to the cytoplasm. The protein resides in the cytoskeleton. Its subcellular location is the microtubule organizing center. The protein localises to the centrosome. It is found in the spindle pole. It localises to the nucleus. It carries out the reaction L-seryl-[protein] + ATP = O-phospho-L-seryl-[protein] + ADP + H(+). The catalysed reaction is L-threonyl-[protein] + ATP = O-phospho-L-threonyl-[protein] + ADP + H(+). Negative regulator of YAP1 in the Hippo signaling pathway that plays a pivotal role in organ size control and tumor suppression by restricting proliferation and promoting apoptosis. The core of this pathway is composed of a kinase cascade wherein STK3/MST2 and STK4/MST1, in complex with its regulatory protein SAV1, phosphorylates and activates LATS1/2 in complex with its regulatory protein MOB1, which in turn phosphorylates and inactivates YAP1 oncoprotein and WWTR1/TAZ. Phosphorylation of YAP1 by LATS2 inhibits its translocation into the nucleus to regulate cellular genes important for cell proliferation, cell death, and cell migration. Also phosphorylates YAP1 in response to cell contact inhibition-driven WWP1 ubiquitination of AMOTL2, which results in LATS2 activation. Acts as a tumor suppressor which plays a critical role in centrosome duplication, maintenance of mitotic fidelity and genomic stability. Negatively regulates G1/S transition by down-regulating cyclin E/CDK2 kinase activity. Negative regulator of the androgen receptor. Phosphorylates SNAI1 in the nucleus leading to its nuclear retention and stabilization, which enhances its epithelial-mesenchymal transition and tumor cell invasion/migration activities. This tumor-promoting activity is independent of its effects upon YAP1 or WWTR1/TAZ. Acts as an activator of the NLRP3 inflammasome by mediating phosphorylation of 'Ser-265' of NLRP3 following NLRP3 palmitoylation, promoting NLRP3 activation by NEK7. The sequence is that of Serine/threonine-protein kinase LATS2 from Mus musculus (Mouse).